Consider the following 530-residue polypeptide: Membrane-associated transporter protein (530 aa).

At 1 to 46 (MGSNSGQAGRHIYKSLADDGPFDSVEPPKRPTSRLIMHSMAMFGRE) the chain is on the cytoplasmic side. A helical membrane pass occupies residues 47-67 (FCYAVEAAYVTPVLLSVGLPS). Position 68 (Ser-68) is a topological domain, extracellular. Residues 69–89 (LYSIVWFLSPILGFLLQPVVG) traverse the membrane as a helical segment. The Cytoplasmic segment spans residues 90-110 (SASDHCRSRWGRRRPYILTLG). The chain crosses the membrane as a helical span at residues 111 to 131 (VMMLVGMALYLNGATVVAALI). The Extracellular portion of the chain corresponds to 132–138 (ANPRRKL). A helical membrane pass occupies residues 139–159 (VWAISVTMIGVVLFDFAADFI). At 160-184 (DGPIKAYLFDVCSHQDKEKGLHYHA) the chain is on the cytoplasmic side. Residues 185 to 205 (LFTGFGGALGYLLGAIDWAHL) form a helical membrane-spanning segment. At 206–216 (ELGRLLGTEFQ) the chain is on the extracellular side. A helical membrane pass occupies residues 217–237 (VMFFFSALVLTLCFTVHLCSI). Residues 238–318 (SEAPLTEVAK…ALVNMPPHYR (81 aa)) are Cytoplasmic-facing. The helical transmembrane segment at 319–339 (YLCISHLIGWTAFLSNMLFFT) threads the bilayer. Topologically, residues 340 to 366 (DFMGQIVYRGDPYSAHNSTEFLIYERG) are extracellular. Asn-356 is a glycosylation site (N-linked (GlcNAc...) asparagine). A helical transmembrane segment spans residues 367–387 (VEVGCWGLCINSVFSSLYSYF). The Cytoplasmic portion of the chain corresponds to 388 to 398 (QKVLVSYIGLK). A helical transmembrane segment spans residues 399–419 (GLYFTGYLLFGLGTGFIGLFP). Over 420 to 425 (NVYSTL) the chain is Extracellular. The chain crosses the membrane as a helical span at residues 426–446 (VLCSLFGVMSSTLYTVPFNLI). The Cytoplasmic portion of the chain corresponds to 447 to 477 (TEYHREEEKERQQAPGGDPDNSVRGKGMDCA). Residues 478 to 498 (TLTCMVQLAQILVGGGLGFLV) traverse the membrane as a helical segment. Residues 499–504 (NTAGTV) are Extracellular-facing. Residues 505-525 (VVVVITASAVALIGCCFVALF) traverse the membrane as a helical segment. Residues 526 to 530 (VRYVD) are Cytoplasmic-facing.

Belongs to the glycoside-pentoside-hexuronide (GPH) cation symporter transporter (TC 2.A.2) family. Interacts with TYRP1. Expressed in mature melanocytes.

It localises to the melanosome membrane. The enzyme catalyses sucrose(out) + H(+)(out) = sucrose(in) + H(+)(in). It carries out the reaction D-glucose(out) + H(+)(out) = D-glucose(in) + H(+)(in). Its function is as follows. Proton-associated glucose and sucrose transporter. May be able to transport also fructose. Expressed at a late melanosome maturation stage where functions as proton/glucose exporter which increase lumenal pH by decreasing glycolysis. Regulates melanogenesis by maintaining melanosome neutralization that is initially initiated by transient OCA2 and required for a proper function of the tyrosinase TYR. This is Membrane-associated transporter protein from Homo sapiens (Human).